Consider the following 240-residue polypeptide: RNA-free ribonuclease P (240 aa).

The protein belongs to the HARP family.

It catalyses the reaction Endonucleolytic cleavage of RNA, removing 5'-extranucleotides from tRNA precursor.. In terms of biological role, RNA-free RNase P that catalyzes the removal of the 5'-leader sequence from pre-tRNA to produce the mature 5'-terminus. The polypeptide is RNA-free ribonuclease P (Methanococcus aeolicus (strain ATCC BAA-1280 / DSM 17508 / OCM 812 / Nankai-3)).